The following is a 385-amino-acid chain: Succinyl-diaminopimelate desuccinylase (385 aa).

Position 78 (H78) interacts with Zn(2+). The active site involves D80. D110 contributes to the Zn(2+) binding site. The Proton acceptor role is filled by E144. Zn(2+) contacts are provided by E145, E173, and H358.

The protein belongs to the peptidase M20A family. DapE subfamily. As to quaternary structure, homodimer. Requires Zn(2+) as cofactor. Co(2+) is required as a cofactor.

It catalyses the reaction N-succinyl-(2S,6S)-2,6-diaminopimelate + H2O = (2S,6S)-2,6-diaminopimelate + succinate. It participates in amino-acid biosynthesis; L-lysine biosynthesis via DAP pathway; LL-2,6-diaminopimelate from (S)-tetrahydrodipicolinate (succinylase route): step 3/3. Catalyzes the hydrolysis of N-succinyl-L,L-diaminopimelic acid (SDAP), forming succinate and LL-2,6-diaminopimelate (DAP), an intermediate involved in the bacterial biosynthesis of lysine and meso-diaminopimelic acid, an essential component of bacterial cell walls. The polypeptide is Succinyl-diaminopimelate desuccinylase (Gluconacetobacter diazotrophicus (strain ATCC 49037 / DSM 5601 / CCUG 37298 / CIP 103539 / LMG 7603 / PAl5)).